We begin with the raw amino-acid sequence, 511 residues long: MSVSALSSTRLPGSFSGFLQAAALLGLLLLLLKAAQLYLRRQWLLRALQQFPCPPSHWLLGHSREFPIDSELQQVLKRVEKFPSACPRWLWGSELFLICYDPDYMKTILGRSDPKARVSYSFLAPWIGYGLLLLEGQTWFQHRRMLTPAFHYDILKPYVGLMVDSVQVMLDKLEKLARKDAPLEIYEHVSLMTLETIMKCAFSHQGSVQLESRTSKSYIQAVRELSDLALQRVRNVFHQSDFLYRLSPEGRLSHRACQLAHEHTDRVIQQRKAQLQQEGELEKVRRKRRLDFLDVLLFAKMENGSSLSDQDLRAEVDTFMFEGHDTTASGISWIFYALATHPEHQHRCREEIQGLLGDGASITWEHLDKMPYTTMCIKEALRLYPPVPGVGSKLSSPVTFPDGRSLPKGIIITLSIYGLHHNPKVWPNPEVFDPSRFAPGSARHSHAFLPFSGGSRNCIGKQFAMNELKVAVALTLVRFELLPDPTRVPIPITRLVLKSKNGIHLRLRKLH.

Positions 1 to 4 (MSVS) are excised as a propeptide. Residues Glu-322 and Cys-458 each coordinate heme.

It belongs to the cytochrome P450 family. The cofactor is heme. Liver, kidney, small intestine.

The protein localises to the endoplasmic reticulum membrane. The protein resides in the microsome membrane. It catalyses the reaction an omega-methyl-long-chain fatty acid + reduced [NADPH--hemoprotein reductase] + O2 = an omega-hydroxy-long-chain fatty acid + oxidized [NADPH--hemoprotein reductase] + H2O + H(+). Its function is as follows. Cytochromes P450 are a group of heme-thiolate monooxygenases. In liver microsomes, this enzyme is involved in an NADPH-dependent electron transport pathway. It oxidizes a variety of structurally unrelated compounds, including steroids, fatty acids, and xenobiotics. Functionally, the kidney P-450 system is rather specialized for the omega-hydroxylation of fatty acids. Both P450-KA1 and P450-KA2 catalyze the omega- and (omega-1)-hydroxylation of various fatty acids with no drug-metabolizing activity, and hydroxylate prostaglandin A1 and A2 solely at the omega-position. This chain is Cytochrome P450 4A7 (CYP4A7), found in Oryctolagus cuniculus (Rabbit).